The sequence spans 582 residues: ATP-dependent lipid A-core flippase (582 aa).

5 helical membrane-spanning segments follow: residues 16–36, 63–83, 153–173, 253–273, and 275–295; these read LWPT…ALIL, VLVW…ITSY, IIGL…ILIV, PIIQ…ASFP, and VMDN…IALM. Residues 28 to 310 form the ABC transmembrane type-1 domain; it reads IVAGVALILN…LTNVNAQFQR (283 aa). Residues 342 to 578 enclose the ABC transporter domain; that stretch reads VEFRNVTFTY…RGVYAQLHKM (237 aa). 376-383 is an ATP binding site; it reads GRSGSGKS.

The protein belongs to the ABC transporter superfamily. Lipid exporter (TC 3.A.1.106) family. Homodimer.

The protein resides in the cell inner membrane. It catalyses the reaction ATP + H2O + lipid A-core oligosaccharideSide 1 = ADP + phosphate + lipid A-core oligosaccharideSide 2.. Its function is as follows. Involved in lipopolysaccharide (LPS) biosynthesis. Translocates lipid A-core from the inner to the outer leaflet of the inner membrane. Transmembrane domains (TMD) form a pore in the inner membrane and the ATP-binding domain (NBD) is responsible for energy generation. In Shigella flexneri, this protein is ATP-dependent lipid A-core flippase.